Consider the following 337-residue polypeptide: Holliday junction branch migration complex subunit RuvB (337 aa).

The interval 4-184 (ADRLIQPQVL…FGIPLRLEFY (181 aa)) is large ATPase domain (RuvB-L). Residues R24, G65, K68, T69, T70, 131–133 (EDY), R174, Y184, and R221 contribute to the ATP site. T69 contacts Mg(2+). The segment at 185–255 (NVKDLCTIVT…VAQQALDMLD (71 aa)) is small ATPAse domain (RuvB-S). Positions 258–337 (QEGFDYLDRK…FNIITPDVPK (80 aa)) are head domain (RuvB-H). Residues R294, R313, and R318 each contribute to the DNA site.

It belongs to the RuvB family. As to quaternary structure, homohexamer. Forms an RuvA(8)-RuvB(12)-Holliday junction (HJ) complex. HJ DNA is sandwiched between 2 RuvA tetramers; dsDNA enters through RuvA and exits via RuvB. An RuvB hexamer assembles on each DNA strand where it exits the tetramer. Each RuvB hexamer is contacted by two RuvA subunits (via domain III) on 2 adjacent RuvB subunits; this complex drives branch migration. In the full resolvosome a probable DNA-RuvA(4)-RuvB(12)-RuvC(2) complex forms which resolves the HJ.

Its subcellular location is the cytoplasm. The catalysed reaction is ATP + H2O = ADP + phosphate + H(+). Functionally, the RuvA-RuvB-RuvC complex processes Holliday junction (HJ) DNA during genetic recombination and DNA repair, while the RuvA-RuvB complex plays an important role in the rescue of blocked DNA replication forks via replication fork reversal (RFR). RuvA specifically binds to HJ cruciform DNA, conferring on it an open structure. The RuvB hexamer acts as an ATP-dependent pump, pulling dsDNA into and through the RuvAB complex. RuvB forms 2 homohexamers on either side of HJ DNA bound by 1 or 2 RuvA tetramers; 4 subunits per hexamer contact DNA at a time. Coordinated motions by a converter formed by DNA-disengaged RuvB subunits stimulates ATP hydrolysis and nucleotide exchange. Immobilization of the converter enables RuvB to convert the ATP-contained energy into a lever motion, pulling 2 nucleotides of DNA out of the RuvA tetramer per ATP hydrolyzed, thus driving DNA branch migration. The RuvB motors rotate together with the DNA substrate, which together with the progressing nucleotide cycle form the mechanistic basis for DNA recombination by continuous HJ branch migration. Branch migration allows RuvC to scan DNA until it finds its consensus sequence, where it cleaves and resolves cruciform DNA. This is Holliday junction branch migration complex subunit RuvB from Shewanella denitrificans (strain OS217 / ATCC BAA-1090 / DSM 15013).